Here is a 383-residue protein sequence, read N- to C-terminus: Plant intracellular Ras-group-related LRR protein 8 (383 aa).

LRR repeat units follow at residues 56-79, 80-102, 104-126, 127-149, 151-173, 174-197, 199-219, 221-244, 245-268, and 270-290; these read RQNIKTLDLSGMSLASLSASSINL, ASISKLDLSNNNIQKIPESLVAR, LNLWALDLQSNQLKTLPNSIGCL, SKLKFLNVSGNYLQSLPKTIEDC, SLEELNANFNELTRLPDAIGFEL, TNLTKLSVNSNKLVLLPNSVSYLT, LRVLDARLNRLSSLPEDLENL, NLQVLNVSQNFQHLTTLPYSVGLL, ISLVELDVSYNGITVLPDSLGCLR, and IQKLSVEGNPLISPPFEVVEQ. The short motif at 291–298 is the GVYW; degenerate element; the sequence is GLEALKQY.

The protein belongs to the SHOC2 family. As to expression, widely expressed except flowers.

Leucine-rich repeat protein that likely mediates protein interactions, possibly in the context of signal transduction. The polypeptide is Plant intracellular Ras-group-related LRR protein 8 (PIRL8) (Arabidopsis thaliana (Mouse-ear cress)).